Consider the following 332-residue polypeptide: ATP-dependent (S)-NAD(P)H-hydrate dehydratase (332 aa).

One can recognise a YjeF C-terminal domain in the interval 46-326 (LLERARNIVP…EQIHNVFDDI (281 aa)). Residues G146 and 199 to 205 (NAIEFCR) contribute to the (6S)-NADPHX site. ATP contacts are provided by residues 230–234 (KGLND) and 251–260 (GSGRRCGGQG). Residue D261 coordinates (6S)-NADPHX.

It belongs to the NnrD/CARKD family. Mg(2+) is required as a cofactor.

The catalysed reaction is (6S)-NADHX + ATP = ADP + phosphate + NADH + H(+). It carries out the reaction (6S)-NADPHX + ATP = ADP + phosphate + NADPH + H(+). Functionally, catalyzes the dehydration of the S-form of NAD(P)HX at the expense of ATP, which is converted to ADP. Together with NAD(P)HX epimerase, which catalyzes the epimerization of the S- and R-forms, the enzyme allows the repair of both epimers of NAD(P)HX, a damaged form of NAD(P)H that is a result of enzymatic or heat-dependent hydration. The polypeptide is ATP-dependent (S)-NAD(P)H-hydrate dehydratase (Aedes aegypti (Yellowfever mosquito)).